Consider the following 277-residue polypeptide: Thymidylate synthase (277 aa).

A dUMP-binding site is contributed by R21. Residue H51 coordinates (6R)-5,10-methylene-5,6,7,8-tetrahydrofolate. 126-127 contributes to the dUMP binding site; it reads RR. C159 functions as the Nucleophile in the catalytic mechanism. Residues 179-182, N190, and 220-222 contribute to the dUMP site; these read RSSD and HAY. D182 contacts (6R)-5,10-methylene-5,6,7,8-tetrahydrofolate. Residue A276 coordinates (6R)-5,10-methylene-5,6,7,8-tetrahydrofolate.

This sequence belongs to the thymidylate synthase family. Bacterial-type ThyA subfamily. In terms of assembly, homodimer.

The protein localises to the cytoplasm. It catalyses the reaction dUMP + (6R)-5,10-methylene-5,6,7,8-tetrahydrofolate = 7,8-dihydrofolate + dTMP. It functions in the pathway pyrimidine metabolism; dTTP biosynthesis. Functionally, catalyzes the reductive methylation of 2'-deoxyuridine-5'-monophosphate (dUMP) to 2'-deoxythymidine-5'-monophosphate (dTMP) while utilizing 5,10-methylenetetrahydrofolate (mTHF) as the methyl donor and reductant in the reaction, yielding dihydrofolate (DHF) as a by-product. This enzymatic reaction provides an intracellular de novo source of dTMP, an essential precursor for DNA biosynthesis. The protein is Thymidylate synthase of Pseudomonas fluorescens (strain SBW25).